Consider the following 598-residue polypeptide: Probable translation initiation factor IF-2 (598 aa).

The 223-residue stretch at 3 to 225 (LRCPIVSVLG…GLAQKFLEQK (223 aa)) folds into the tr-type G domain. The tract at residues 12 to 19 (GHVDHGKT) is G1. Residue 12–19 (GHVDHGKT) participates in GTP binding. The G2 stretch occupies residues 37–41 (GITQH). A G3 region spans residues 76-79 (DTPG). GTP-binding positions include 76-80 (DTPGH) and 130-133 (NKVD). The segment at 130 to 133 (NKVD) is G4. The interval 200-202 (SAM) is G5.

Belongs to the TRAFAC class translation factor GTPase superfamily. Classic translation factor GTPase family. IF-2 subfamily.

Function in general translation initiation by promoting the binding of the formylmethionine-tRNA to ribosomes. Seems to function along with eIF-2. In Methanococcus maripaludis (strain C5 / ATCC BAA-1333), this protein is Probable translation initiation factor IF-2.